A 79-amino-acid polypeptide reads, in one-letter code: uncharacterized protein (79 aa).

This is an uncharacterized protein from Saccharomyces cerevisiae (strain ATCC 204508 / S288c) (Baker's yeast).